We begin with the raw amino-acid sequence, 441 residues long: MAGUK p55 subfamily member 4 (441 aa).

One can recognise a PDZ domain in the interval 1 to 84; that stretch reads MRTVCLVKNQ…TIMFKVIPVS (84 aa). Residues 91–161 enclose the SH3 domain; that stretch reads QTTVYVRAMI…PSNHLLKRKQ (71 aa). The Guanylate kinase-like domain maps to 232 to 421; it reads HRLIVLVGPS…ARAQLLSAIQ (190 aa). Positions 373–430 form a coiled coil; it reads VDMKFKDEDLQEMEELAQKMESQFGQFFDHVIVNDNLQDARAQLLSAIQKAEEELQWV.

It belongs to the MAGUK family. Interacts with MPDZ. May interact with GRIA2. Forms a complex with CRB1 and PALS1. Interacts with FASLG. Highly expressed in brain and detected in lung, and bone (at protein level). Also expressed in intestine and spleen.

Its subcellular location is the cytoplasm. In terms of biological role, may play a role in retinal photoreceptors development. In Rattus norvegicus (Rat), this protein is MAGUK p55 subfamily member 4 (Mpp4).